The sequence spans 258 residues: uncharacterized protein (258 aa).

Helical transmembrane passes span 33–53 (LFVI…VTTN), 59–79 (FDSW…IFVF), 88–108 (LLYL…FSFF), and 140–160 (IIAL…WLIQ). Positions 237 to 258 (NNKINSELQPPSILNKNSKPIE) are disordered. Positions 242-258 (SELQPPSILNKNSKPIE) are enriched in polar residues.

The protein resides in the membrane. This is an uncharacterized protein from Dictyostelium discoideum (Social amoeba).